The sequence spans 326 residues: Putative replication protein B (326 aa).

This sequence belongs to the ParB family.

The chain is Putative replication protein B from Sinorhizobium fredii (strain NBRC 101917 / NGR234).